We begin with the raw amino-acid sequence, 238 residues long: Type III pantothenate kinase (238 aa).

An ATP-binding site is contributed by 7–14 (DAGNSGLK). Substrate is bound by residues Y88 and 95 to 98 (GVDR). The active-site Proton acceptor is D97. Position 117 (D117) interacts with K(+). T120 serves as a coordination point for ATP. Substrate is bound at residue T172.

The protein belongs to the type III pantothenate kinase family. In terms of assembly, homodimer. Requires NH4(+) as cofactor. The cofactor is K(+).

Its subcellular location is the cytoplasm. The enzyme catalyses (R)-pantothenate + ATP = (R)-4'-phosphopantothenate + ADP + H(+). It functions in the pathway cofactor biosynthesis; coenzyme A biosynthesis; CoA from (R)-pantothenate: step 1/5. Catalyzes the phosphorylation of pantothenate (Pan), the first step in CoA biosynthesis. The sequence is that of Type III pantothenate kinase from Hahella chejuensis (strain KCTC 2396).